The chain runs to 365 residues: Peptide chain release factor 2 (365 aa).

Gln252 is modified (N5-methylglutamine).

It belongs to the prokaryotic/mitochondrial release factor family. In terms of processing, methylated by PrmC. Methylation increases the termination efficiency of RF2.

It localises to the cytoplasm. Its function is as follows. Peptide chain release factor 2 directs the termination of translation in response to the peptide chain termination codons UGA and UAA. This Yersinia enterocolitica serotype O:8 / biotype 1B (strain NCTC 13174 / 8081) protein is Peptide chain release factor 2.